We begin with the raw amino-acid sequence, 454 residues long: Bifunctional protein GlmU (454 aa).

The segment at 1–240 is pyrophosphorylase; that stretch reads MNVSVVILAA…EEEFMGVNSK (240 aa). UDP-N-acetyl-alpha-D-glucosamine-binding positions include 8-11, lysine 22, and 87-88; these read LAAG and GT. A Mg(2+)-binding site is contributed by aspartate 119. Residues glycine 152, glutamate 166, asparagine 181, and asparagine 238 each coordinate UDP-N-acetyl-alpha-D-glucosamine. Residue asparagine 238 coordinates Mg(2+). Residues 241–261 form a linker region; the sequence is IQLACAQEIMLQRLREKAMEQ. An N-acetyltransferase region spans residues 262 to 454; sequence GVIMNLPHTI…SDKNEEKKEQ (193 aa). 2 residues coordinate UDP-N-acetyl-alpha-D-glucosamine: arginine 325 and lysine 342. The active-site Proton acceptor is histidine 353. Residues tyrosine 356 and asparagine 367 each contribute to the UDP-N-acetyl-alpha-D-glucosamine site. Acetyl-CoA is bound by residues alanine 370, 376–377, serine 395, alanine 413, and arginine 430; that span reads NY.

The protein in the N-terminal section; belongs to the N-acetylglucosamine-1-phosphate uridyltransferase family. It in the C-terminal section; belongs to the transferase hexapeptide repeat family. Homotrimer. It depends on Mg(2+) as a cofactor.

It localises to the cytoplasm. The catalysed reaction is alpha-D-glucosamine 1-phosphate + acetyl-CoA = N-acetyl-alpha-D-glucosamine 1-phosphate + CoA + H(+). It carries out the reaction N-acetyl-alpha-D-glucosamine 1-phosphate + UTP + H(+) = UDP-N-acetyl-alpha-D-glucosamine + diphosphate. Its pathway is nucleotide-sugar biosynthesis; UDP-N-acetyl-alpha-D-glucosamine biosynthesis; N-acetyl-alpha-D-glucosamine 1-phosphate from alpha-D-glucosamine 6-phosphate (route II): step 2/2. It functions in the pathway nucleotide-sugar biosynthesis; UDP-N-acetyl-alpha-D-glucosamine biosynthesis; UDP-N-acetyl-alpha-D-glucosamine from N-acetyl-alpha-D-glucosamine 1-phosphate: step 1/1. It participates in bacterial outer membrane biogenesis; LPS lipid A biosynthesis. Its function is as follows. Catalyzes the last two sequential reactions in the de novo biosynthetic pathway for UDP-N-acetylglucosamine (UDP-GlcNAc). The C-terminal domain catalyzes the transfer of acetyl group from acetyl coenzyme A to glucosamine-1-phosphate (GlcN-1-P) to produce N-acetylglucosamine-1-phosphate (GlcNAc-1-P), which is converted into UDP-GlcNAc by the transfer of uridine 5-monophosphate (from uridine 5-triphosphate), a reaction catalyzed by the N-terminal domain. The protein is Bifunctional protein GlmU of Helicobacter hepaticus (strain ATCC 51449 / 3B1).